Here is a 334-residue protein sequence, read N- to C-terminus: Transcription factor MYB92 (334 aa).

HTH myb-type domains follow at residues 9–61 (DSGL…TNYL) and 62–116 (RPDI…KKKL). 2 consecutive DNA-binding regions (H-T-H motif) follow at residues 37-61 (WRALPKLAGLNRCGKSCRLRWTNYL) and 89-112 (WSTIANQLPGRTDNEIKNFWNTHL).

In terms of assembly, interacts with FBX5. In terms of tissue distribution, highly expressed in roots and at lower levels in stems, flowers and siliques.

It is found in the nucleus. Functionally, probable transcription factor. This chain is Transcription factor MYB92, found in Arabidopsis thaliana (Mouse-ear cress).